A 108-amino-acid chain; its full sequence is NADH dehydrogenase [ubiquinone] 1 alpha subcomplex subunit 8-A (108 aa).

CHCH domains are found at residues 28 to 69 (GIRC…LKDL) and 70 to 108 (HQRCPKEMDAYVGCMYYYTNEFELCRKEQEAFEKVCPLK). 3 short sequence motifs (cx9C motif) span residues 31–41 (CMPENMAFLKC), 51–61 (CLEKGRDVTRC), and 73–83 (CPKEMDAYVGC). 4 disulfides stabilise this stretch: cysteine 31-cysteine 61, cysteine 41-cysteine 51, cysteine 73-cysteine 105, and cysteine 83-cysteine 94. The short motif at 94 to 105 (CRKEQEAFEKVC) is the Cx10C motif element.

This sequence belongs to the complex I NDUFA8 subunit family. Complex I is composed of at least 49 different subunits.

Its subcellular location is the mitochondrion. The protein resides in the mitochondrion intermembrane space. In terms of biological role, accessory subunit of the mitochondrial membrane respiratory chain NADH dehydrogenase (Complex I), that is believed not to be involved in catalysis. Complex I functions in the transfer of electrons from NADH to the respiratory chain. The immediate electron acceptor for the enzyme is believed to be ubiquinone. This chain is NADH dehydrogenase [ubiquinone] 1 alpha subcomplex subunit 8-A, found in Arabidopsis thaliana (Mouse-ear cress).